The primary structure comprises 560 residues: MKVWMAILISILCWQSSVWAVCPAWSPARAQEEISRLQQQIKQWDDDYWKEGKSEVEDGVYDQLSARLTQWQRCFVSEPRDVMMPPLNGAVMHPVAHTGVRKMADKNALSLWMRERSDLWVQPKVDGVAVTLVYRDGKLNKAISRGNGLKGEDWTQKVSLISAVLQTVSGPLANSTLQGEIFLQREGHIQQQMGGINARAKVAGLMMRQGNSDTLNSLAVFVWAWPDGPQLMTDRLKELATAGFTLTQRYTRAVKNADEVARVRNEWWKAKLPFVTDGVVVRGAKEPESRHWLPGQAEWLVAWKYQPVAQVAEVKAIQFAVGKSGKISVVASLAPVMLDDKKVQRVNIGSVRRWQEWDIAPGDQILVSLAGQGIPRIDDVVWRGAERTKPTPPENRFNPLTCYFASDVCQEQFISRLVWLGSKQVLGLDGIGEAGWRALHQTHRFEHIFSWLLLTPEQLQNTPGIAKSKSAQLWHQFNLARNQPFTRWVMAMGIPLTRAALNASDERSWSQLLFSTEQFWQQLPGTGSGRARQVIEWKENAQIKKLGSWLAAQQITGFEP.

Lysine 124 (N6-AMP-lysine intermediate) is an active-site residue.

This sequence belongs to the NAD-dependent DNA ligase family. LigB subfamily.

It carries out the reaction NAD(+) + (deoxyribonucleotide)n-3'-hydroxyl + 5'-phospho-(deoxyribonucleotide)m = (deoxyribonucleotide)n+m + AMP + beta-nicotinamide D-nucleotide.. Catalyzes the formation of phosphodiester linkages between 5'-phosphoryl and 3'-hydroxyl groups in double-stranded DNA using NAD as a coenzyme and as the energy source for the reaction. The polypeptide is DNA ligase B (Shigella flexneri).